Consider the following 172-residue polypeptide: MSKDFIINEQIRAREVRLIDQNGDQLGIKSKQEALEIAARRNLDLVLVAPNAKPPVCRIMDYGKFRFEQQKKEKEARKKQKVINVKEVRLSPTIEEHDFNTKLRNARKFLEKGDKVKATIRFKGRAITHKEIGQRVLDRLSEACADIAVVETAPKMDGRNMFLVLAPKNDNK.

This sequence belongs to the IF-3 family. Monomer.

The protein resides in the cytoplasm. Functionally, IF-3 binds to the 30S ribosomal subunit and shifts the equilibrium between 70S ribosomes and their 50S and 30S subunits in favor of the free subunits, thus enhancing the availability of 30S subunits on which protein synthesis initiation begins. This Geobacillus stearothermophilus (Bacillus stearothermophilus) protein is Translation initiation factor IF-3.